A 252-amino-acid polypeptide reads, in one-letter code: DNA repair protein RecO (252 aa).

It belongs to the RecO family.

Its function is as follows. Involved in DNA repair and RecF pathway recombination. The protein is DNA repair protein RecO of Rhodospirillum rubrum (strain ATCC 11170 / ATH 1.1.1 / DSM 467 / LMG 4362 / NCIMB 8255 / S1).